The primary structure comprises 446 residues: Glutamyl-tRNA reductase (446 aa).

Residues 49–52 (TCNR), serine 107, 112–114 (EPQ), and glutamine 118 contribute to the substrate site. The active-site Nucleophile is cysteine 50. 187-192 (GAGETI) is a binding site for NADP(+). The tract at residues 417–446 (NANEDTRESVDKEQTGTTQGAARGDQRSTG) is disordered. A compositionally biased stretch (basic and acidic residues) spans 420–430 (EDTRESVDKEQ).

Belongs to the glutamyl-tRNA reductase family. In terms of assembly, homodimer.

The enzyme catalyses (S)-4-amino-5-oxopentanoate + tRNA(Glu) + NADP(+) = L-glutamyl-tRNA(Glu) + NADPH + H(+). It functions in the pathway porphyrin-containing compound metabolism; protoporphyrin-IX biosynthesis; 5-aminolevulinate from L-glutamyl-tRNA(Glu): step 1/2. Catalyzes the NADPH-dependent reduction of glutamyl-tRNA(Glu) to glutamate 1-semialdehyde (GSA). The protein is Glutamyl-tRNA reductase of Alkalilimnicola ehrlichii (strain ATCC BAA-1101 / DSM 17681 / MLHE-1).